We begin with the raw amino-acid sequence, 299 residues long: Pyridoxal 5'-phosphate synthase subunit PdxS (299 aa).

Residue Asp24 coordinates D-ribose 5-phosphate. Catalysis depends on Lys81, which acts as the Schiff-base intermediate with D-ribose 5-phosphate. Gly153 provides a ligand contact to D-ribose 5-phosphate. D-glyceraldehyde 3-phosphate is bound at residue Arg165. D-ribose 5-phosphate-binding positions include Gly219 and 240–241 (GS).

Belongs to the PdxS/SNZ family. In terms of assembly, in the presence of PdxT, forms a dodecamer of heterodimers.

The enzyme catalyses aldehydo-D-ribose 5-phosphate + D-glyceraldehyde 3-phosphate + L-glutamine = pyridoxal 5'-phosphate + L-glutamate + phosphate + 3 H2O + H(+). It functions in the pathway cofactor biosynthesis; pyridoxal 5'-phosphate biosynthesis. Functionally, catalyzes the formation of pyridoxal 5'-phosphate from ribose 5-phosphate (RBP), glyceraldehyde 3-phosphate (G3P) and ammonia. The ammonia is provided by the PdxT subunit. Can also use ribulose 5-phosphate and dihydroxyacetone phosphate as substrates, resulting from enzyme-catalyzed isomerization of RBP and G3P, respectively. In Methanococcus maripaludis (strain DSM 14266 / JCM 13030 / NBRC 101832 / S2 / LL), this protein is Pyridoxal 5'-phosphate synthase subunit PdxS.